Here is a 161-residue protein sequence, read N- to C-terminus: Efficient mitochondria targeting-associated protein 19 (161 aa).

At 1–10 (MKLGHREQQF) the chain is on the cytoplasmic side. Residues 7–159 (EQQFYLWYFI…PTFLIPLRLC (153 aa)) enclose the EXPERA domain. Residues 11-31 (YLWYFIVHIPITIFIDSSVVI) traverse the membrane as a helical segment. The Lumenal segment spans residues 32–61 (PAKWQLGIAQKVVSDHIAKQHDFLLSEKPE). Residues 62–82 (WLYWFVVLELVLQLPLFVYFV) traverse the membrane as a helical segment. At 83–101 (NKFWNSSELQVNTNSRLKK) the chain is on the cytoplasmic side. A helical transmembrane segment spans residues 102–122 (WLRIYGWNASLTTLICIVVIF). At 123–141 (KRGYIPYDVLKTSLSMTQK) the chain is on the lumenal side. Residues 142 to 160 (CQLASVYLPTFLIPLRLCF) traverse the membrane as a helical segment. Residue valine 161 is a topological domain, cytoplasmic.

This sequence belongs to the TMEM97/sigma-2 receptor family.

Its subcellular location is the endoplasmic reticulum membrane. In terms of biological role, part of an import route for newly synthesized mitochondrial proteins termed the ER-SURF pathway (ER surface-mediated protein targeting), which retrieves mitochondrial precursor proteins from the ER surface and reroutes them to mitochondria for efficient mitochondrial import. Acts as a quality control factor in the ER, promoting the proteolytic degradation of nonproductive and extramitochondrial precursor proteins in the ER membrane thus removing them from the ER surface. This chain is Efficient mitochondria targeting-associated protein 19, found in Saccharomyces cerevisiae (strain ATCC 204508 / S288c) (Baker's yeast).